An 85-amino-acid chain; its full sequence is LYR motif-containing protein 5A (85 aa).

Belongs to the complex I LYR family.

In Danio rerio (Zebrafish), this protein is LYR motif-containing protein 5A (lyrm5a).